The sequence spans 240 residues: SEVVSFSFTKFNPNPKDIILQGDALVTSKGKLQLTKVKDGKPVDHSLGRALYAAPIHIWDDSTDRVASFATSFSFVVEAPDESKTADGIAFFLAPPDTQPQKDGGFLGLFNDSNKSIQTVAVEFDTFSNTWDPSARHIGINVNSIESMKYVKWGWENGKVANVYISYEASTKTLTASLTYPSNATSYIVSANVDLKSALPEWVRVGFSATSGLSRDHVETHDVLDWSFTSTLQAPSDDSN.

Residue N111 is glycosylated (N-linked (GlcNAc...) asparagine). Residues E123 and D125 each coordinate Mn(2+). Ca(2+) is bound by residues D125, N129, and D132. The Mn(2+) site is built by D132 and H137. N-linked (GlcNAc...) asparagine glycosylation is present at N183.

The protein belongs to the leguminous lectin family. Homotetramer. Partially N-glycosylated at Asn-111 and Asn-183 with the heptasaccharide [(beta-xylosyl-1,2)(alpha-mannosyl-1,6)(alpha-mannosyl-1,3)]beta-manosyl-1,4-GlcNAC-beta-1,4-GlcNAc-beta-1,4 [alpha-fucosyl-1,3]GlcNAc. A small proportion of alpha chains are proteolytically cleaved at 114-115 into gamma and beta chains. This is probably dependent on the deglycosylation of Asn-111. As to expression, seed.

Functionally, lectin that binds galactose. The chain is Seed lectin from Vatairea macrocarpa.